Reading from the N-terminus, the 242-residue chain is DNA repair protein RecO (242 aa).

This sequence belongs to the RecO family.

Involved in DNA repair and RecF pathway recombination. The protein is DNA repair protein RecO of Paracoccus denitrificans (strain Pd 1222).